A 314-amino-acid polypeptide reads, in one-letter code: Epithelial-stromal interaction protein 1 (314 aa).

4 disordered regions span residues 1-72, 200-219, 225-267, and 292-314; these read MYPR…PNET, NRSA…WKLP, PSRA…HQEE, and SQPG…GWGI. Positions 43–58 are enriched in basic and acidic residues; it reads AEPKGPKLERQGHGDQ. Residues 71-180 adopt a coiled-coil conformation; that stretch reads ETRRQKIQRI…QEDIRRATLR (110 aa). The segment covering 232–267 has biased composition (basic and acidic residues); sequence AHKDSPQKEDNQKLQKTRDGHQKNKLLETKGQHQEE. Residues 305–314 are compositionally biased toward polar residues; sequence NMNSTDGWGI.

Plays a role in M1 macrophage polarization and is required for the proper regulation of gene expression during M1 versus M2 macrophage differentiation. Might play a role in RELA/p65 and STAT1 phosphorylation and nuclear localization upon activation of macrophages. This Rattus norvegicus (Rat) protein is Epithelial-stromal interaction protein 1 (Epsti1).